We begin with the raw amino-acid sequence, 356 residues long: Tetraacyldisaccharide 4'-kinase (356 aa).

ATP is bound at residue 67-74; sequence FVGGTGKT.

It belongs to the LpxK family.

The enzyme catalyses a lipid A disaccharide + ATP = a lipid IVA + ADP + H(+). Its pathway is glycolipid biosynthesis; lipid IV(A) biosynthesis; lipid IV(A) from (3R)-3-hydroxytetradecanoyl-[acyl-carrier-protein] and UDP-N-acetyl-alpha-D-glucosamine: step 6/6. Its function is as follows. Transfers the gamma-phosphate of ATP to the 4'-position of a tetraacyldisaccharide 1-phosphate intermediate (termed DS-1-P) to form tetraacyldisaccharide 1,4'-bis-phosphate (lipid IVA). This chain is Tetraacyldisaccharide 4'-kinase, found in Herminiimonas arsenicoxydans.